The primary structure comprises 710 residues: Pentatricopeptide repeat-containing protein At1g02060, chloroplastic (710 aa).

A chloroplast-targeting transit peptide spans 1–21; it reads MVSSVPKLHALFVSKSQPVLR. PPR repeat units lie at residues 137-171, 172-202, 208-242, 243-277, 280-314, 315-351, 352-386, 387-421, 429-459, 463-497, 498-532, and 533-567; these read QDRY…GISP, SVLT…MRRT, DSYT…HCNP, DVVT…ATDV, NVVS…GLKP, NAVT…TFAP, DACT…KLHP, DSAS…EVLL, LAAA…LMKR, DPPS…EFVP, DLET…SYLP, and VATT…RIRQ.

It belongs to the PPR family. P subfamily.

Its subcellular location is the plastid. It localises to the chloroplast. In Arabidopsis thaliana (Mouse-ear cress), this protein is Pentatricopeptide repeat-containing protein At1g02060, chloroplastic.